We begin with the raw amino-acid sequence, 108 residues long: Class I hydrophobin 3 (108 aa).

Residues 1–17 (MFFQTTIVAALAFLAVA) form the signal peptide. 4 disulfide bridges follow: cysteine 28–cysteine 87, cysteine 35–cysteine 81, cysteine 36–cysteine 69, and cysteine 88–cysteine 101. Residue asparagine 37 is glycosylated (N-linked (GlcNAc...) asparagine).

This sequence belongs to the fungal hydrophobin family. As to quaternary structure, self-assembles to form functional amyloid fibrils called rodlets. Self-assembly into fibrillar rodlets occurs spontaneously at hydrophobic:hydrophilic interfaces and the rodlets further associate laterally to form amphipathic monolayers.

The protein localises to the secreted. It is found in the cell wall. Its function is as follows. Aerial growth, conidiation, and dispersal of filamentous fungi in the environment rely upon a capability of their secreting small amphipathic proteins called hydrophobins (HPBs) with low sequence identity. Class I can self-assemble into an outermost layer of rodlet bundles on aerial cell surfaces, conferring cellular hydrophobicity that supports fungal growth, development and dispersal; whereas Class II form highly ordered films at water-air interfaces through intermolecular interactions but contribute nothing to the rodlet structure. Vmh3 is a class I hydrophobin that is essential for the maintenance of the surface hydrophobicity of the mycelium and might be involved in the development of fruiting bodies. Plays an important role in hyphal resistance against environmental stress. Necessary for the efficient biodegradation of lignin. The polypeptide is Class I hydrophobin 3 (Pleurotus ostreatus (Oyster mushroom)).